The chain runs to 62 residues: Photosystem II reaction center protein Z (62 aa).

2 helical membrane passes run 8–28 (AVFALIATSLILVIGVPVVFA) and 41–61 (FSGTSLWIGLVFLVGILNSLI).

This sequence belongs to the PsbZ family. As to quaternary structure, PSII is composed of 1 copy each of membrane proteins PsbA, PsbB, PsbC, PsbD, PsbE, PsbF, PsbH, PsbI, PsbJ, PsbK, PsbL, PsbM, PsbT, PsbY, PsbZ, Psb30/Ycf12, at least 3 peripheral proteins of the oxygen-evolving complex and a large number of cofactors. It forms dimeric complexes.

It localises to the plastid. It is found in the chloroplast thylakoid membrane. Its function is as follows. May control the interaction of photosystem II (PSII) cores with the light-harvesting antenna, regulates electron flow through the 2 photosystem reaction centers. PSII is a light-driven water plastoquinone oxidoreductase, using light energy to abstract electrons from H(2)O, generating a proton gradient subsequently used for ATP formation. This is Photosystem II reaction center protein Z from Piper cenocladum (Ant piper).